The following is a 231-amino-acid chain: 5'-methylthioadenosine/S-adenosylhomocysteine nucleosidase (231 aa).

E12 serves as the catalytic Proton acceptor. Residues G78, V153, and 174-175 (ME) contribute to the substrate site. The active-site Proton donor is the D198.

The protein belongs to the PNP/UDP phosphorylase family. MtnN subfamily.

The enzyme catalyses S-adenosyl-L-homocysteine + H2O = S-(5-deoxy-D-ribos-5-yl)-L-homocysteine + adenine. It carries out the reaction S-methyl-5'-thioadenosine + H2O = 5-(methylsulfanyl)-D-ribose + adenine. It catalyses the reaction 5'-deoxyadenosine + H2O = 5-deoxy-D-ribose + adenine. It functions in the pathway amino-acid biosynthesis; L-methionine biosynthesis via salvage pathway; S-methyl-5-thio-alpha-D-ribose 1-phosphate from S-methyl-5'-thioadenosine (hydrolase route): step 1/2. In terms of biological role, catalyzes the irreversible cleavage of the glycosidic bond in both 5'-methylthioadenosine (MTA) and S-adenosylhomocysteine (SAH/AdoHcy) to adenine and the corresponding thioribose, 5'-methylthioribose and S-ribosylhomocysteine, respectively. Also cleaves 5'-deoxyadenosine, a toxic by-product of radical S-adenosylmethionine (SAM) enzymes, into 5-deoxyribose and adenine. The polypeptide is 5'-methylthioadenosine/S-adenosylhomocysteine nucleosidase (Vibrio vulnificus (strain YJ016)).